The following is a 111-amino-acid chain: MPPLSESEFLALATRELDRIEAAVEAAADAADADIEISRTGNVMELEFENGSKIIINSQAPMQELWVAARAGGFHFRRDGERWIDTRNGGELYAALSGYVSEQAGASLSFH.

Belongs to the frataxin family.

Its function is as follows. Involved in iron-sulfur (Fe-S) cluster assembly. May act as a regulator of Fe-S biogenesis. The sequence is that of Iron-sulfur cluster assembly protein CyaY from Cupriavidus taiwanensis (strain DSM 17343 / BCRC 17206 / CCUG 44338 / CIP 107171 / LMG 19424 / R1) (Ralstonia taiwanensis (strain LMG 19424)).